Here is a 142-residue protein sequence, read N- to C-terminus: Large ribosomal subunit protein uL13 (142 aa).

It belongs to the universal ribosomal protein uL13 family. Part of the 50S ribosomal subunit.

Functionally, this protein is one of the early assembly proteins of the 50S ribosomal subunit, although it is not seen to bind rRNA by itself. It is important during the early stages of 50S assembly. The chain is Large ribosomal subunit protein uL13 from Pseudomonas paraeruginosa (strain DSM 24068 / PA7) (Pseudomonas aeruginosa (strain PA7)).